Consider the following 141-residue polypeptide: Globin, extracellular monomeric (141 aa).

The 141-residue stretch at 1-141 (ECDALQRFKV…LGVITGAIHD (141 aa)) folds into the Globin domain. An intrachain disulfide couples C2 to C131. Residue H94 participates in heme b binding.

This sequence belongs to the globin family. As to quaternary structure, the giant hemoglobins of worms are formed of a monomeric subunit and a disulfide-bonded trimer. This subunit is monomeric.

The protein resides in the secreted. The chain is Globin, extracellular monomeric from Tubifex tubifex (Sludge worm).